We begin with the raw amino-acid sequence, 104 residues long: 2,4-dinitrotoluene dioxygenase system, ferredoxin component (104 aa).

Positions 1 to 21 (MSENWIDAAARDEVPRGRRDR) are disordered. The Rieske domain maps to 5–101 (WIDAAARDEV…VKIENMRVML (97 aa)). The [2Fe-2S] cluster site is built by Cys-45, His-47, Cys-64, and His-67.

This sequence belongs to the bacterial ring-hydroxylating dioxygenase ferredoxin component family. As to quaternary structure, the 2,4-dinitrotoluene dioxygenase (DNTDO) multicomponent enzyme system is composed of an electron transfer component and a dioxygenase component (iron sulfur protein (ISP)). The electron transfer component is composed of a ferredoxin reductase (DntAa) and a ferredoxin (DntAb), and the dioxygenase component is formed of a large alpha subunit (DntAc) and a small beta subunit (DntAd). It depends on [2Fe-2S] cluster as a cofactor.

Functionally, component of the 2,4-dinitrotoluene dioxygenase (DNTDO) multicomponent enzyme system which catalyzes the incorporation of both atoms of molecular oxygen into 2,4-dinitrotoluene (DNT) to form 4-methyl-5-nitrocatechol (MNC) and nitrite. Functions as an intermediate electron transfer protein via a specific interaction with iron sulfur protein components (ISP)(DntAc and DntAd). Also able to convert naphthalene to cis-(1R,2S)-dihydroxy-1,2-dihydronaphthalene. This is 2,4-dinitrotoluene dioxygenase system, ferredoxin component from Burkholderia sp. (strain RASC).